Reading from the N-terminus, the 491-residue chain is NADH-quinone oxidoreductase subunit N 1 (491 aa).

The next 14 helical transmembrane spans lie at 15–35 (VLGMPAFLMIWAMLVLIVDMF), 41–61 (VLLTLSLIGLGVTAALGALDY), 77–97 (FGVLVNWILLAGTALTLLIAF), 105–125 (LSQGEFYPLVLFATSGMLFLV), 130–150 (LVTIFIGVETLSIALYVLTGF), 165–185 (LLLGGFAAGFLVYGIALIYGM), 211–231 (PILLAGVGFVLIALGFKVSMF), 247–269 (PVTAYMSVATKGAAFAAMLRFLN), 279–299 (WQLLFGLFAAATMAYGNIVAV), 307–327 (MLAYSSIAHAGYMLLGVLAAS), 333–353 (AFTVYLLAYTLTNLGAFAVLI), 378–398 (LALAMTVFMFSLAGVPPTAGF), 416–436 (LAIIGVVTSVISAFFYLRVIV), and 459–479 (LGVIVAVIGIIAVGILPNIFT).

The protein belongs to the complex I subunit 2 family. NDH-1 is composed of 14 different subunits. Subunits NuoA, H, J, K, L, M, N constitute the membrane sector of the complex.

Its subcellular location is the cell membrane. It carries out the reaction a quinone + NADH + 5 H(+)(in) = a quinol + NAD(+) + 4 H(+)(out). Its function is as follows. NDH-1 shuttles electrons from NADH, via FMN and iron-sulfur (Fe-S) centers, to quinones in the respiratory chain. The immediate electron acceptor for the enzyme in this species is believed to be ubiquinone. Couples the redox reaction to proton translocation (for every two electrons transferred, four hydrogen ions are translocated across the cytoplasmic membrane), and thus conserves the redox energy in a proton gradient. The sequence is that of NADH-quinone oxidoreductase subunit N 1 from Herpetosiphon aurantiacus (strain ATCC 23779 / DSM 785 / 114-95).